Reading from the N-terminus, the 184-residue chain is Large ribosomal subunit protein uL5 (184 aa).

This sequence belongs to the universal ribosomal protein uL5 family. As to quaternary structure, part of the 50S ribosomal subunit; part of the 5S rRNA/L5/L18/L25 subcomplex. Contacts the 5S rRNA and the P site tRNA. Forms a bridge to the 30S subunit in the 70S ribosome.

In terms of biological role, this is one of the proteins that bind and probably mediate the attachment of the 5S RNA into the large ribosomal subunit, where it forms part of the central protuberance. In the 70S ribosome it contacts protein S13 of the 30S subunit (bridge B1b), connecting the 2 subunits; this bridge is implicated in subunit movement. Contacts the P site tRNA; the 5S rRNA and some of its associated proteins might help stabilize positioning of ribosome-bound tRNAs. This Agrobacterium fabrum (strain C58 / ATCC 33970) (Agrobacterium tumefaciens (strain C58)) protein is Large ribosomal subunit protein uL5.